The primary structure comprises 479 residues: UPF0164 protein TP_0865 (479 aa).

Residues Met-1–Ala-49 form the signal peptide.

It belongs to the UPF0164 family.

This is UPF0164 protein TP_0865 from Treponema pallidum (strain Nichols).